A 105-amino-acid chain; its full sequence is Large ribosomal subunit protein bL21 (105 aa).

Belongs to the bacterial ribosomal protein bL21 family. In terms of assembly, part of the 50S ribosomal subunit. Contacts protein L20.

In terms of biological role, this protein binds to 23S rRNA in the presence of protein L20. This chain is Large ribosomal subunit protein bL21, found in Rickettsia africae (strain ESF-5).